The primary structure comprises 249 residues: Putative nicotinamide mononucleotide adenylyltransferase (249 aa).

2 residues coordinate NAD(+): Ser-40 and Phe-41. His-48 contributes to the ATP binding site. Residues Thr-97, Gly-129, Asp-131, Arg-165, and Asn-206 each coordinate NAD(+). 214-217 (TRAR) provides a ligand contact to ATP.

This sequence belongs to the eukaryotic NMN adenylyltransferase family. POF1 subfamily.

It localises to the cytoplasm. Its subcellular location is the nucleus. It catalyses the reaction beta-nicotinamide D-ribonucleotide + ATP + H(+) = diphosphate + NAD(+). Its pathway is cofactor biosynthesis; NAD(+) biosynthesis; NAD(+) from nicotinamide D-ribonucleotide: step 1/1. Catalyzes the formation of NAD(+) from nicotinamide mononucleotide (NMN) and ATP. Involved in the salvage pathway for NAD(+) biosynthesis via NMN. In Schizosaccharomyces pombe (strain 972 / ATCC 24843) (Fission yeast), this protein is Putative nicotinamide mononucleotide adenylyltransferase.